A 390-amino-acid chain; its full sequence is Glutamate 5-kinase (390 aa).

Lysine 29 contributes to the ATP binding site. Positions 69, 156, and 168 each coordinate substrate. Position 188–189 (188–189) interacts with ATP; it reads TD. Positions 295–374 constitute a PUA domain; it reads SGSLIVDAGA…EQFDRILGNN (80 aa).

It belongs to the glutamate 5-kinase family.

It is found in the cytoplasm. It carries out the reaction L-glutamate + ATP = L-glutamyl 5-phosphate + ADP. Its pathway is amino-acid biosynthesis; L-proline biosynthesis; L-glutamate 5-semialdehyde from L-glutamate: step 1/2. Functionally, catalyzes the transfer of a phosphate group to glutamate to form L-glutamate 5-phosphate. The chain is Glutamate 5-kinase from Psychrobacter arcticus (strain DSM 17307 / VKM B-2377 / 273-4).